Reading from the N-terminus, the 132-residue chain is Small ribosomal subunit protein uS8 (132 aa).

It belongs to the universal ribosomal protein uS8 family. Part of the 30S ribosomal subunit. Contacts proteins S5 and S12.

Functionally, one of the primary rRNA binding proteins, it binds directly to 16S rRNA central domain where it helps coordinate assembly of the platform of the 30S subunit. The chain is Small ribosomal subunit protein uS8 from Clostridium beijerinckii (strain ATCC 51743 / NCIMB 8052) (Clostridium acetobutylicum).